The sequence spans 226 residues: Transcription repressor OFP12 (226 aa).

Over residues 68–87 (SSTFTASTSTAANSSSSSAS) the composition is skewed to low complexity. Residues 68–104 (SSTFTASTSTAANSSSSSASYDDSDNYGFAPDDDSPP) form a disordered region. In terms of domain architecture, OVATE spans 152 to 217 (VKHYVQSPDP…IRAFADILVS (66 aa)).

As to quaternary structure, interacts with KNAT1, KNAT2, KNAT3 and KNAT4. In terms of tissue distribution, expressed in roots, shoots, stems, flower buds and siliques.

It is found in the nucleus. Its function is as follows. Transcriptional repressor that regulates multiple aspects of plant growth and development through the regulation of BEL1-LIKE (BLH) and KNOX TALE (KNAT) homeodomain transcription factors. The chain is Transcription repressor OFP12 (OFP12) from Arabidopsis thaliana (Mouse-ear cress).